Reading from the N-terminus, the 314-residue chain is S-methyl-5'-thioadenosine phosphorylase (314 aa).

Phosphate-binding positions include S31, 73–74, and 106–107; these read RH and SA. M207 lines the substrate pocket. Phosphate is bound at residue T208. 231–233 lines the substrate pocket; sequence DYD.

It belongs to the PNP/MTAP phosphorylase family. MTAP subfamily. Homohexamer. Dimer of a homotrimer.

It carries out the reaction S-methyl-5'-thioadenosine + phosphate = 5-(methylsulfanyl)-alpha-D-ribose 1-phosphate + adenine. It functions in the pathway amino-acid biosynthesis; L-methionine biosynthesis via salvage pathway; S-methyl-5-thio-alpha-D-ribose 1-phosphate from S-methyl-5'-thioadenosine (phosphorylase route): step 1/1. Its function is as follows. Catalyzes the reversible phosphorylation of S-methyl-5'-thioadenosine (MTA) to adenine and 5-methylthioribose-1-phosphate. Involved in the breakdown of MTA, a major by-product of polyamine biosynthesis. Responsible for the first step in the methionine salvage pathway after MTA has been generated from S-adenosylmethionine. Has broad substrate specificity with 6-aminopurine nucleosides as preferred substrates. The polypeptide is S-methyl-5'-thioadenosine phosphorylase (Prochlorococcus marinus (strain SARG / CCMP1375 / SS120)).